The primary structure comprises 488 residues: Solanidine UDP-glucose glucosyltransferase 1 (488 aa).

His23 acts as the Proton acceptor in catalysis. His23 contacts an anthocyanidin. The Charge relay role is filled by Asp127. Residues Val352, Gln354, His369, Asn373, Ser374, and Glu377 each coordinate UDP-alpha-D-glucose. Ala392 contacts an anthocyanidin. UDP-alpha-D-glucose is bound by residues Asp393 and Gln394.

This sequence belongs to the UDP-glycosyltransferase family. Expressed in the shoot apical meristem (SAM) and tuber.

The catalysed reaction is solasodine + UDP-alpha-D-glucose = solasodine 3-beta-D-glucoside + UDP + H(+). It carries out the reaction solanidine + UDP-alpha-D-glucose = solanidine 3-O-beta-D-glucopyranoside + UDP + H(+). It catalyses the reaction tomatidine + UDP-alpha-D-glucose = tomatidine 3-O-beta-D-glucopyranoside + UDP + H(+). In terms of biological role, glucosyltransferase involved in the glucosylation of the steroidal alkaloid aglycons solanidine, solasodine and tomatidine to produce their corresponding glycoalkaloids. This is Solanidine UDP-glucose glucosyltransferase 1 from Solanum tuberosum (Potato).